The primary structure comprises 312 residues: Glyoxylate/hydroxypyruvate reductase A (312 aa).

The active site involves Arg227. The active-site Proton donor is the His275.

Belongs to the D-isomer specific 2-hydroxyacid dehydrogenase family. GhrA subfamily.

Its subcellular location is the cytoplasm. It catalyses the reaction glycolate + NADP(+) = glyoxylate + NADPH + H(+). The catalysed reaction is (R)-glycerate + NAD(+) = 3-hydroxypyruvate + NADH + H(+). It carries out the reaction (R)-glycerate + NADP(+) = 3-hydroxypyruvate + NADPH + H(+). Catalyzes the NADPH-dependent reduction of glyoxylate and hydroxypyruvate into glycolate and glycerate, respectively. The polypeptide is Glyoxylate/hydroxypyruvate reductase A (Shigella boydii serotype 18 (strain CDC 3083-94 / BS512)).